A 1025-amino-acid chain; its full sequence is DNA polymerase (1025 aa).

It belongs to the DNA polymerase type-B family.

It catalyses the reaction DNA(n) + a 2'-deoxyribonucleoside 5'-triphosphate = DNA(n+1) + diphosphate. In terms of biological role, replicates the viral genome. Host DNA polymerases cannot substitute for the viral enzyme in this process. This chain is DNA polymerase, found in Noctuidae (owlet moths).